The following is a 101-amino-acid chain: Small ribosomal subunit protein uS14 (101 aa).

This sequence belongs to the universal ribosomal protein uS14 family. In terms of assembly, part of the 30S ribosomal subunit. Contacts proteins S3 and S10.

Its function is as follows. Binds 16S rRNA, required for the assembly of 30S particles and may also be responsible for determining the conformation of the 16S rRNA at the A site. This is Small ribosomal subunit protein uS14 from Colwellia psychrerythraea (strain 34H / ATCC BAA-681) (Vibrio psychroerythus).